The primary structure comprises 148 residues: Coactosin (148 aa).

The ADF-H domain maps to 1–134; the sequence is MSGFDLSEVA…VEDEIAAKIK (134 aa). The F-loop; important for stable binding to G-actin and F-actin signature appears at 71-76; the sequence is DEESKR. Ser-147 carries the post-translational modification Phosphoserine.

Belongs to the actin-binding proteins ADF family. Coactosin subfamily. In terms of assembly, interacts with 14-3-3 protein 3. Post-translationally, phosphorylation at Ser-147 appears not to affect its binding to actin; however, it may regulate phagocytosis and motility.

The protein resides in the cytoplasm. It is found in the cell projection. Its subcellular location is the phagocytic cup. It localises to the pseudopodium. The protein localises to the cell membrane. The protein resides in the cytoskeleton. Actin-binding protein which is involved in F-actin stabilization. May play a role during phagocytosis and pseudopod formation by contributing to the maintenance of F-actin. The chain is Coactosin from Entamoeba histolytica (strain ATCC 30459 / HM-1:IMSS / ABRM).